The following is a 405-amino-acid chain: MKKKVLTFPSEKIGFSSDNEEFDLVMARGDYLAKNKSQKYMIIDMLGTGTFGQVVRCVGSDGEEVAIKVVKNQPKYYNYEMNEVRILHKLLYNNLNDRFVTIKDVFMYKQHLCIVEELLGRNLYTFLKMTRFKGLDHPTLRTILHQILEGMVQLSLLGIIHCDLKPENILIADYDTFKIKIIDFGSAVTSPQGSHFYVQSRYYRAPEVILGIPYGSSCDIWSLGCIGYELYVGHPLFPGKDNMDQIGRIHGLFGSLPMFMLEHGKNSSTFFEKENGYRFMGPPSNFTLEDMKKMIRSKGNSKEDDNMLIKFLLRALQPSHLIRPDAKSLASHSYLKVRDTSAEADKACNDRSGVQQNIFPANKNMRHMSTTGVILPSKKQKPTDDRRKISVYGISYENNLNRDSE.

Positions 40-335 (YMIIDMLGTG…AKSLASHSYL (296 aa)) constitute a Protein kinase domain. ATP is bound by residues 46 to 54 (LGTGTFGQV) and Lys-68. Asp-163 serves as the catalytic Proton acceptor.

Belongs to the protein kinase superfamily. CMGC Ser/Thr protein kinase family. MNB/DYRK subfamily.

It localises to the cytoplasm. The protein localises to the nucleus. It catalyses the reaction L-seryl-[protein] + ATP = O-phospho-L-seryl-[protein] + ADP + H(+). The catalysed reaction is L-threonyl-[protein] + ATP = O-phospho-L-threonyl-[protein] + ADP + H(+). It carries out the reaction L-tyrosyl-[protein] + ATP = O-phospho-L-tyrosyl-[protein] + ADP + H(+). In terms of biological role, negative regulator of the cell cycle acting downstream of the cAMP-dependent protein kinase. Part of a glucose-sensing system involved in growth control in response to glucose availability. The sequence is that of Probable dual specificity protein kinase YAK1 homolog (YAK1) from Encephalitozoon cuniculi (strain GB-M1) (Microsporidian parasite).